The sequence spans 388 residues: Succinate--CoA ligase [ADP-forming] subunit beta (388 aa).

One can recognise an ATP-grasp domain in the interval 9-244 (KQLFAEFGLP…PSQEDEREAH (236 aa)). Residues Lys46, 53 to 55 (GRG), Glu99, Ser102, and Glu107 contribute to the ATP site. Positions 199 and 213 each coordinate Mg(2+). Substrate-binding positions include Asn264 and 321-323 (GIV).

The protein belongs to the succinate/malate CoA ligase beta subunit family. Heterotetramer of two alpha and two beta subunits. Requires Mg(2+) as cofactor.

The enzyme catalyses succinate + ATP + CoA = succinyl-CoA + ADP + phosphate. It catalyses the reaction GTP + succinate + CoA = succinyl-CoA + GDP + phosphate. The protein operates within carbohydrate metabolism; tricarboxylic acid cycle; succinate from succinyl-CoA (ligase route): step 1/1. In terms of biological role, succinyl-CoA synthetase functions in the citric acid cycle (TCA), coupling the hydrolysis of succinyl-CoA to the synthesis of either ATP or GTP and thus represents the only step of substrate-level phosphorylation in the TCA. The beta subunit provides nucleotide specificity of the enzyme and binds the substrate succinate, while the binding sites for coenzyme A and phosphate are found in the alpha subunit. The polypeptide is Succinate--CoA ligase [ADP-forming] subunit beta (Vibrio parahaemolyticus serotype O3:K6 (strain RIMD 2210633)).